A 223-amino-acid chain; its full sequence is Glutathione S-transferase alpha I (223 aa).

Met1 carries the N-acetylmethionine modification. Ala2 carries the N-acetylalanine; in Glutathione S-transferase alpha I, N-terminally processed modification. In terms of domain architecture, GST N-terminal spans 3 to 83; sequence RKPLLHYFNG…YVANKHNLYG (81 aa). N6-succinyllysine is present on Lys4. Glutathione contacts are provided by residues Tyr9, Arg45, 54 to 55, and 67 to 68; these read QV and QT. The GST C-terminal domain occupies 85-208; the sequence is DMKERALIDM…QPGSQRKPPM (124 aa).

This sequence belongs to the GST superfamily. Alpha family. In terms of assembly, homodimer or heterodimer of GSTA1 and GSTA2. As to expression, liver and lung.

The protein localises to the cytoplasm. The catalysed reaction is RX + glutathione = an S-substituted glutathione + a halide anion + H(+). It catalyses the reaction prostaglandin A2 + glutathione = prostaglandin A2-S-(R)-glutathione. The enzyme catalyses prostaglandin J2 + glutathione = prostaglandin J2-S-(R)-glutathione. It carries out the reaction (13S)-hydroperoxy-(9Z,11E)-octadecadienoate + 2 glutathione = (13S)-hydroxy-(9Z,11E)-octadecadienoate + glutathione disulfide + H2O. The catalysed reaction is androst-5-ene-3,17-dione = androst-4-ene-3,17-dione. Functionally, glutathione S-transferase that catalyzes the nucleophilic attack of the sulfur atom of glutathione on the electrophilic groups of a wide range of exogenous and endogenous compounds. Involved in the formation of glutathione conjugates of both prostaglandin A2 (PGA2) and prostaglandin J2 (PGJ2). It also catalyzes the isomerization of D5-androstene-3,17-dione (AD) into D4-androstene-3,17-dione and may therefore play an important role in hormone biosynthesis. Through its glutathione-dependent peroxidase activity toward the fatty acid hydroperoxide (13S)-hydroperoxy-(9Z,11E)-octadecadienoate/13-HPODE it is also involved in the metabolism of oxidized linoleic acid. This is Glutathione S-transferase alpha I from Oryctolagus cuniculus (Rabbit).